The following is a 311-amino-acid chain: 4-hydroxy-tetrahydrodipicolinate synthase (311 aa).

Residue threonine 51 participates in pyruvate binding. The active-site Proton donor/acceptor is the tyrosine 140. The active-site Schiff-base intermediate with substrate is lysine 168. Isoleucine 209 is a binding site for pyruvate.

The protein belongs to the DapA family. As to quaternary structure, homotetramer; dimer of dimers.

The protein localises to the cytoplasm. It carries out the reaction L-aspartate 4-semialdehyde + pyruvate = (2S,4S)-4-hydroxy-2,3,4,5-tetrahydrodipicolinate + H2O + H(+). It functions in the pathway amino-acid biosynthesis; L-lysine biosynthesis via DAP pathway; (S)-tetrahydrodipicolinate from L-aspartate: step 3/4. Its function is as follows. Catalyzes the condensation of (S)-aspartate-beta-semialdehyde [(S)-ASA] and pyruvate to 4-hydroxy-tetrahydrodipicolinate (HTPA). The chain is 4-hydroxy-tetrahydrodipicolinate synthase from Streptococcus pneumoniae (strain ATCC 700669 / Spain 23F-1).